Consider the following 174-residue polypeptide: Dual-action ribosomal maturation protein DarP (174 aa).

It belongs to the DarP family.

Its subcellular location is the cytoplasm. In terms of biological role, member of a network of 50S ribosomal subunit biogenesis factors which assembles along the 30S-50S interface, preventing incorrect 23S rRNA structures from forming. Promotes peptidyl transferase center (PTC) maturation. In Pseudomonas paraeruginosa (strain DSM 24068 / PA7) (Pseudomonas aeruginosa (strain PA7)), this protein is Dual-action ribosomal maturation protein DarP.